A 789-amino-acid polypeptide reads, in one-letter code: Trimethylamine-oxide aldolase (789 aa).

The protein in the C-terminal section; belongs to the GcvT family.

It catalyses the reaction trimethylamine N-oxide + H(+) = dimethylamine + formaldehyde. Catalyzes the conversion of trimethylamine N-oxide (TMAO) to dimethylamine (DMA) and formaldehyde. The chain is Trimethylamine-oxide aldolase from Ruegeria pomeroyi (strain ATCC 700808 / DSM 15171 / DSS-3) (Silicibacter pomeroyi).